Reading from the N-terminus, the 228-residue chain is Hematopoietically-expressed homeobox protein hhex (228 aa).

The segment at residues 117–176 (RKGGQVRFSNDQTIELEKKFETQKYLSPPERKRLAKMLQLSERQVKTWFQNRRAKWRRLK) is a DNA-binding region (homeobox). The segment at 175-228 (LKQENPPSTGKREAEDSDTRRLSDAAARARELESGASTDSEELLDIEDEHQFTL) is disordered. Residues 184–207 (GKREAEDSDTRRLSDAAARARELE) are compositionally biased toward basic and acidic residues. Residues 213-222 (DSEELLDIED) show a composition bias toward acidic residues.

In terms of tissue distribution, expressed in embryonic endothelial and blood lineages. From late-blastula stage, expression is restricted to the dorsal marginal region of the extraembryonic yolk syncytial layer (YSL). By the onset of gastrulation, expressed in the entire dorsal half of the YSL. Post-gastrulation, expression appears in both anterior and posterior lateral plate mesoderm by the 3-somite stage. Posteriorly, expression is in the intermediate cell mass (ICM), which contains both endothelial and blood precursors. Subsequently expressed in the developing endothelial cells including the endocardium until the onset of circulation (24 hpf) and disappears completely by 30 hpf, at which point expression is seen in the thyroid and liver primordia. Also expressed in the developing biliary tree and pancreas.

The protein resides in the nucleus. Recognizes the DNA sequence 5'-ATTAA-3'. Transcriptional repressor. Regulates the differentiation of both endothelial and blood cells. Plays a role in embryonic dorsoventral patterning by regulating bmp expression. May establish anterior identity. Functions in the embryo to regulate liver development. Functions extraembryonically to generate organ chirality. The polypeptide is Hematopoietically-expressed homeobox protein hhex (Danio rerio (Zebrafish)).